The following is a 210-amino-acid chain: Thymidylate kinase (210 aa).

G14 to S21 provides a ligand contact to ATP.

It belongs to the thymidylate kinase family.

The catalysed reaction is dTMP + ATP = dTDP + ADP. The protein operates within pyrimidine metabolism; dTTP biosynthesis. Functionally, catalyzes the conversion of dTMP to dTDP. The polypeptide is Thymidylate kinase (tmp1) (Schizosaccharomyces pombe (strain 972 / ATCC 24843) (Fission yeast)).